The sequence spans 297 residues: Protoheme IX farnesyltransferase 1 (297 aa).

9 helical membrane-spanning segments follow: residues valine 23 to valine 43, tryptophan 45 to valine 65, leucine 93 to phenylalanine 113, leucine 117 to leucine 137, isoleucine 145 to glycine 165, proline 171 to isoleucine 191, leucine 216 to histidine 236, leucine 241 to tyrosine 261, and isoleucine 277 to leucine 297.

The protein belongs to the UbiA prenyltransferase family. Protoheme IX farnesyltransferase subfamily.

The protein resides in the cell inner membrane. It carries out the reaction heme b + (2E,6E)-farnesyl diphosphate + H2O = Fe(II)-heme o + diphosphate. It participates in porphyrin-containing compound metabolism; heme O biosynthesis; heme O from protoheme: step 1/1. Converts heme B (protoheme IX) to heme O by substitution of the vinyl group on carbon 2 of heme B porphyrin ring with a hydroxyethyl farnesyl side group. The polypeptide is Protoheme IX farnesyltransferase 1 (Pseudomonas putida (strain ATCC 700007 / DSM 6899 / JCM 31910 / BCRC 17059 / LMG 24140 / F1)).